A 326-amino-acid polypeptide reads, in one-letter code: Beta-ketoacyl-[acyl-carrier-protein] synthase III (326 aa).

Catalysis depends on residues C112 and H251. The interval 252 to 256 (QANSR) is ACP-binding. Residue N281 is part of the active site.

This sequence belongs to the thiolase-like superfamily. FabH family. Homodimer.

The protein resides in the cytoplasm. It carries out the reaction malonyl-[ACP] + acetyl-CoA + H(+) = 3-oxobutanoyl-[ACP] + CO2 + CoA. It functions in the pathway lipid metabolism; fatty acid biosynthesis. Functionally, catalyzes the condensation reaction of fatty acid synthesis by the addition to an acyl acceptor of two carbons from malonyl-ACP. Catalyzes the first condensation reaction which initiates fatty acid synthesis and may therefore play a role in governing the total rate of fatty acid production. Possesses both acetoacetyl-ACP synthase and acetyl transacylase activities. Its substrate specificity determines the biosynthesis of branched-chain and/or straight-chain of fatty acids. This Clostridium botulinum (strain Loch Maree / Type A3) protein is Beta-ketoacyl-[acyl-carrier-protein] synthase III.